The following is a 942-amino-acid chain: MVVSAGPWSSEKAEMNILEINEKLRPQLAENKQQFVNLKERCFLTQLAGFLANRQKKYKYEECKDLIRFMLRNERQFKEEKLAEQLKQAEELRQYKVLVHSQERELTQLKEKLQEGRDASRSLNEHLQALLTLDEPDKSQGQDLQEQLAEGCRLAQHLVQKLSPENDEDEDEDVQVEEDEKVQKSSAPREVQKAEESKVPEDSLEECAITCSNSHGPCDSNQPHKNIKITFEEDEVNSTLVVDRESSHDECQDALNILSVPGPTSSATNVSMVVSAGPLSSEKAEMNILEINEKLHPQLAEKKQQFRNLKEKCFLTQLAGFLANRQNKYKYEECKDLIKSMLRNERQFKEEKLAEQLKQAEELRQYKVLVHTQERELTQLREKLREGRDASLSLNEHLQALLTPDEPDKSQGQDLQEQLAEGCRLAQHLVQKLSPENDNDDDEDVQVEVAEKVQKSSAPREMQKAEEKEVPEDSLEECAITYSNSHGPYDSNQPHRKTKITFEEDKVDSALIGSSSHVEWEDAVHIIPENESDDEEEEEKGPVSPRNLQESEEEEVPQESWDEGYSTLSIPPEMLASYKSYSSTFHSLEEQQVCMAVDIGRHRWDQVKKEDQEATGPRLSRELLDEKGPEVLQDSLDRCYSTPSGCLELTDSCQPYRSAFYILEQQRVGLAVDMDEIEKYQEVEEDQDPSCPRLSRELLDEKEPEVLQDSLDRCYSTPSGYLELPDLGQPYSSAVYSLEEQYLGLALDVDRIKKDQEEEEDQGPPCPRLSRELLEVVEPEVLQDSLDRCYSTPSSCLEQPDSCQPYGSSFYALEEKHVGFSLDVGEIEKKGKGKIRRGRRSKKKRRRGRKEGEEDQNPPCPRLNSVLMEVEEPEVLQDSLDRCYSTPSMYCELRDSFQHYRSVFYSFEEQHISFALDMDNRFFTLTVTSLYLVFQMGVIFPQ.

Residues 89–130 (AEELRQYKVLVHSQERELTQLKEKLQEGRDASRSLNEHLQAL) adopt a coiled-coil conformation. A disordered region spans residues 161–203 (KLSPENDEDEDEDVQVEEDEKVQKSSAPREVQKAEESKVPEDS). Positions 165 to 180 (ENDEDEDEDVQVEEDE) are enriched in acidic residues. Positions 165–259 (ENDEDEDEDV…ECQDALNILS (95 aa)) constitute an Olduvai 1 domain. Over residues 190-201 (EVQKAEESKVPE) the composition is skewed to basic and acidic residues. Residues 339-401 (KSMLRNERQF…LSLNEHLQAL (63 aa)) adopt a coiled-coil conformation. Olduvai domains follow at residues 436–528 (ENDN…HIIP), 529–617 (ENES…ATGP), 620–675 (SREL…VDMD), 676–767 (EIEK…PPCP), 770–843 (SREL…RSKK), and 844–904 (KRRR…RSVF). 2 disordered regions span residues 451–474 (EKVQ…PEDS) and 528–566 (PENE…EGYS). Composition is skewed to acidic residues over residues 530-539 (NESDDEEEEE) and 550-562 (ESEE…ESWD). Residues 831-849 (GKGKIRRGRRSKKKRRRGR) are compositionally biased toward basic residues. The interval 831–863 (GKGKIRRGRRSKKKRRRGRKEGEEDQNPPCPRL) is disordered.

Belongs to the NBPF family. In terms of tissue distribution, expressed in the mammary gland.

The protein resides in the cytoplasm. This Homo sapiens (Human) protein is NBPF family member NBPF8.